A 238-amino-acid chain; its full sequence is Ribonuclease HII (238 aa).

The RNase H type-2 domain maps to 12 to 197; the sequence is GIVAGVDEAG…VLELLTDDLL (186 aa). A divalent metal cation-binding residues include aspartate 18, glutamate 19, and aspartate 107.

This sequence belongs to the RNase HII family. Requires Mn(2+) as cofactor. The cofactor is Mg(2+).

It is found in the cytoplasm. The catalysed reaction is Endonucleolytic cleavage to 5'-phosphomonoester.. Functionally, endonuclease that specifically degrades the RNA of RNA-DNA hybrids. The polypeptide is Ribonuclease HII (rnhB) (Thermotoga maritima (strain ATCC 43589 / DSM 3109 / JCM 10099 / NBRC 100826 / MSB8)).